The chain runs to 734 residues: MPPEAKRIVVKGFDPRKSRQRQETYYVTMIDRLNMALQVVMAGLGLKTGYQELYSGVENLTRADQASRCFNILQHHMSSGIQLLKDSAESFIQLEGTETDTNACTVVVGCWNKWLERVEIVQNIFYYMDKTFLSHHPDYPTIEELSLSLFREKLMAVKNIQIPFLNSLLQSFENLHSSKSTDHAYLQDAMLMLHRTEMYSSVFVPMYLVMLSRFYDTESSQKIQELPLEEYLEYAMSSLEREDAYVEKFDIVRDKKSIRETVQRCLITSHLDTLTKGISQFIEKRDAHSCKLLYALLQFNHETEYLIQPWSDCLVDVGFKLVNDESKDDTLVQELLSFHKFLQVVVDESFLHDETLSYAMRKAFETFINGAKGSQREAPARLIAKYIDYLLRVGEQASGGKPLKEVFSEILDLFRYIASKDIFEAYYKLDIAKRLLLNKSASAQNELMLLDMLKKTCGSQFTHSLEGMFRDVNISKEFTSSFRHSKAAHNLHRDLYVNVLSQAYWPSYPESHIRLPDDMQQDLDCFEKFYLSKQVGKKISWYASLGHCIVKARFPLGNKELSISLFQACVLLQFNNCLGGEGISYQDLKKSTELSDIDLTRTLQSLSCARIRPLVMVPKSKKPSPDTMFYVNEKFTDKLYRVKINQIYLKEERQENSDVQEQVVRDRQFELQASIVRVMKQKEKMKHDDLVQYVINNVKDRGIPLVSDVKTAIEKLLEKEYLEREDNDIYTYVT.

Residues 666-728 form the Cullin neddylation domain; it reads DRQFELQASI…KEYLEREDND (63 aa). Residue K680 forms a Glycyl lysine isopeptide (Lys-Gly) (interchain with G-Cter in NEDD8) linkage.

This sequence belongs to the cullin family. In terms of assembly, component of the Clr4 methyltransferase complex (ClrC) composed of at least clr4, rik1, pcu4, rbx1, raf1 and raf2. The cullin pcu4, rik1, raf1, raf2 and the ring-box protein rbx1 are components of an E3 ubiquitin ligase, whose activity is essential for heterochromatin assembly. Post-translationally, neddylated; enhancing the ubiquitin-ligase activity.

It is found in the cytoplasm. It localises to the nucleus. The protein resides in the chromosome. The protein operates within protein modification; protein ubiquitination. In terms of biological role, required, indirectly, for activation of ribonucleotide reductase through the degradation of the protein spd1, thereby supplying deoxyribonucleotides for DNA replication and repair. Also has a role as a scaffold for assembling ubiquitin ligases. Component of the Clr4 methyltransferase complex (ClrC) which contributes to the establishment of heterochromatin by specifically methylating histone H3 to form H3K9me. ClrC preferentially ubiquitylates H3K14 and ClrC-mediated H3 ubiquitination promotes clr4 methyltransferase activity for the methylation of H3K9. H3K9me represents a specific tag for epigenetic transcriptional repression by recruiting swi6/HP1 to methylated histones which leads to transcriptional silencing within centromeric heterochromatin, telomeric regions and at the silent mating-type loci. The polypeptide is Cullin-4 (pcu4) (Schizosaccharomyces pombe (strain 972 / ATCC 24843) (Fission yeast)).